Consider the following 448-residue polypeptide: uncharacterized protein (448 aa).

Residues 428 to 440 (PFKTDCDPNNDND) show a composition bias toward polar residues. The tract at residues 428-448 (PFKTDCDPNNDNDLTPPAVFG) is disordered.

This is an uncharacterized protein from Mycoplasma pneumoniae (strain ATCC 29342 / M129 / Subtype 1) (Mycoplasmoides pneumoniae).